The following is a 228-amino-acid chain: Protein JAZ7 (228 aa).

One can recognise a Tify domain in the interval 101–136 (LSPNESTLTIFYMGEVHIFPGISPEKAELIIDLVSK). Residues 176–199 (MARRATLARFLEKRKHRLIKARPY) carry the Jas motif. The short motif at 177-184 (ARRATLAR) is the Nuclear localization signal element.

Belongs to the TIFY/JAZ family. Interacts with MYC2 (via N-terminus). JAZ7 competes with MED25 for binding to MYC2. Interacts with MTB1 (via N-terminus).

Its subcellular location is the nucleus. Repressor of jasmonate responses. This is Protein JAZ7 from Solanum lycopersicum (Tomato).